A 352-amino-acid chain; its full sequence is Probable cytosolic iron-sulfur protein assembly protein CIAO1 homolog (352 aa).

WD repeat units lie at residues 12-51, 58-97, 106-145, 151-190, 195-234, 245-284, and 303-352; these read ASNK…LWGS, AHKK…SAPE, GHTS…DVQC, PHSQ…WTVF, GHDS…GKSS, YHTR…LTHI, and AHSE…EYEL.

This sequence belongs to the WD repeat CIA1 family.

Essential component of the cytosolic iron-sulfur (Fe/S) protein assembly machinery. Required for the maturation of extramitochondrial Fe/S proteins. This is Probable cytosolic iron-sulfur protein assembly protein CIAO1 homolog from Schistosoma japonicum (Blood fluke).